Consider the following 300-residue polypeptide: Porphobilinogen deaminase (300 aa).

Cys239 carries the post-translational modification S-(dipyrrolylmethanemethyl)cysteine.

Belongs to the HMBS family. As to quaternary structure, monomer. Dipyrromethane serves as cofactor.

It catalyses the reaction 4 porphobilinogen + H2O = hydroxymethylbilane + 4 NH4(+). It functions in the pathway porphyrin-containing compound metabolism; protoporphyrin-IX biosynthesis; coproporphyrinogen-III from 5-aminolevulinate: step 2/4. Functionally, tetrapolymerization of the monopyrrole PBG into the hydroxymethylbilane pre-uroporphyrinogen in several discrete steps. The sequence is that of Porphobilinogen deaminase from Francisella tularensis subsp. holarctica (strain FTNF002-00 / FTA).